Reading from the N-terminus, the 416-residue chain is Isocitrate dehydrogenase [NADP] (416 aa).

NADP(+)-binding positions include 77-79 (TIT) and arginine 84. Position 79 (threonine 79) interacts with substrate. Residues 96 to 102 (SPNGTIR), arginine 111, and arginine 134 each bind substrate. Residue aspartate 254 participates in Mn(2+) binding. Residue lysine 262 coordinates NADP(+). A Mn(2+)-binding site is contributed by aspartate 277. NADP(+) contacts are provided by residues 312 to 317 (GTVTRH) and asparagine 330.

The protein belongs to the isocitrate and isopropylmalate dehydrogenases family. Heterodimer. Mg(2+) serves as cofactor. The cofactor is Mn(2+).

It localises to the cytoplasm. It catalyses the reaction D-threo-isocitrate + NADP(+) = 2-oxoglutarate + CO2 + NADPH. In terms of biological role, may supply 2-oxoglutarate for amino acid biosynthesis and ammonia assimilation via the glutamine synthetase/glutamate synthase (GS/GOGAT) pathway. This Solanum tuberosum (Potato) protein is Isocitrate dehydrogenase [NADP] (ICDH-1).